The chain runs to 256 residues: 2-C-methyl-D-erythritol 4-phosphate cytidylyltransferase (256 aa).

The protein belongs to the IspD/TarI cytidylyltransferase family. IspD subfamily.

The catalysed reaction is 2-C-methyl-D-erythritol 4-phosphate + CTP + H(+) = 4-CDP-2-C-methyl-D-erythritol + diphosphate. The protein operates within isoprenoid biosynthesis; isopentenyl diphosphate biosynthesis via DXP pathway; isopentenyl diphosphate from 1-deoxy-D-xylulose 5-phosphate: step 2/6. Functionally, catalyzes the formation of 4-diphosphocytidyl-2-C-methyl-D-erythritol from CTP and 2-C-methyl-D-erythritol 4-phosphate (MEP). This Corynebacterium glutamicum (strain ATCC 13032 / DSM 20300 / JCM 1318 / BCRC 11384 / CCUG 27702 / LMG 3730 / NBRC 12168 / NCIMB 10025 / NRRL B-2784 / 534) protein is 2-C-methyl-D-erythritol 4-phosphate cytidylyltransferase.